A 325-amino-acid polypeptide reads, in one-letter code: Ribose-phosphate pyrophosphokinase (325 aa).

Residues 45 to 47 (NGE) and 104 to 105 (RQ) each bind ATP. His138 and Asp178 together coordinate Mg(2+). Residue Lys202 is part of the active site. Residues Arg204, Asp230, and 234–238 (DTGGT) contribute to the D-ribose 5-phosphate site.

The protein belongs to the ribose-phosphate pyrophosphokinase family. Class I subfamily. In terms of assembly, homohexamer. It depends on Mg(2+) as a cofactor.

It localises to the cytoplasm. It catalyses the reaction D-ribose 5-phosphate + ATP = 5-phospho-alpha-D-ribose 1-diphosphate + AMP + H(+). It functions in the pathway metabolic intermediate biosynthesis; 5-phospho-alpha-D-ribose 1-diphosphate biosynthesis; 5-phospho-alpha-D-ribose 1-diphosphate from D-ribose 5-phosphate (route I): step 1/1. Involved in the biosynthesis of the central metabolite phospho-alpha-D-ribosyl-1-pyrophosphate (PRPP) via the transfer of pyrophosphoryl group from ATP to 1-hydroxyl of ribose-5-phosphate (Rib-5-P). This is Ribose-phosphate pyrophosphokinase from Corynebacterium efficiens (strain DSM 44549 / YS-314 / AJ 12310 / JCM 11189 / NBRC 100395).